The primary structure comprises 271 residues: Metal-staphylopine import system ATP-binding protein CntD (271 aa).

The ABC transporter domain occupies 6-251; the sequence is VKHLTITDTW…PEHVYTKYLL (246 aa). 38–45 provides a ligand contact to ATP; that stretch reads GESGSGKS.

The protein belongs to the ABC transporter superfamily. As to quaternary structure, the complex is composed of two ATP-binding proteins (CntD and CntF), two transmembrane proteins (CntB and CntC) and a solute-binding protein (CntA).

Its subcellular location is the cell membrane. With respect to regulation, nickel/cobalt import is reduced in the presence of zinc. In terms of biological role, part of the ABC transporter complex CntABCDF (Opp1) involved in the uptake of metal in complex with the metallophore staphylopine (StP). Involved in the import of divalent metals ions such as nickel, cobalt and zinc. Probably responsible for energy coupling to the transport system. Plays a major role in nickel/cobalt import in zinc-depleted conditions. Contributes to virulence. Required for full urease activity in vitro. This Staphylococcus aureus (strain NCTC 8325 / PS 47) protein is Metal-staphylopine import system ATP-binding protein CntD.